A 639-amino-acid polypeptide reads, in one-letter code: Eukaryotic translation initiation factor 2-alpha kinase 2 (639 aa).

The region spanning 171–588 (FEEYSLLGRG…LEVLNCGLLL (418 aa)) is the Protein kinase domain. Residues 177-185 (LGRGGFGSV) and Lys200 each bind ATP. Positions 298–320 (ISTSRKSSYSSTTESSNFENLES) are enriched in low complexity. The interval 298-322 (ISTSRKSSYSSTTESSNFENLESPR) is disordered. Asp417 serves as the catalytic Proton acceptor.

Belongs to the protein kinase superfamily. Ser/Thr protein kinase family. GCN2 subfamily. Autophosphorylated.

The enzyme catalyses L-seryl-[protein] + ATP = O-phospho-L-seryl-[protein] + ADP + H(+). It carries out the reaction L-threonyl-[protein] + ATP = O-phospho-L-threonyl-[protein] + ADP + H(+). In terms of biological role, mediates down-regulation of protein synthesis in response to stress conditions by the phosphorylation of the alpha subunit of eIF-2 (tif211) on 'Ser-52'. Protein synthesis is inhibited at the level of initiation. Activity is inhibited in the presence of heme. The protein is Eukaryotic translation initiation factor 2-alpha kinase 2 (hri2) of Schizosaccharomyces pombe (strain 972 / ATCC 24843) (Fission yeast).